The sequence spans 212 residues: Putative tyrosine-protein phosphatase OCA1 (212 aa).

The interval 1–27 (MSNKDTSILKGNVDHEEADSNPKLRKI) is disordered. Positions 12–22 (NVDHEEADSNP) are enriched in basic and acidic residues. The region spanning 40–208 (NFCPVERQLY…SVEIDPSKVP (169 aa)) is the Tyrosine-protein phosphatase domain. Cys146 acts as the Phosphocysteine intermediate in catalysis.

Belongs to the protein-tyrosine phosphatase family.

Its subcellular location is the cytoplasm. It carries out the reaction O-phospho-L-tyrosyl-[protein] + H2O = L-tyrosyl-[protein] + phosphate. Functionally, putative tyrosine-protein phosphatase required for protection against superoxide stress. The sequence is that of Putative tyrosine-protein phosphatase OCA1 (OCA1) from Scheffersomyces stipitis (strain ATCC 58785 / CBS 6054 / NBRC 10063 / NRRL Y-11545) (Yeast).